The following is a 107-amino-acid chain: Integration host factor subunit beta (107 aa).

The segment at 78–107 is disordered; that stretch reads PHFKPGKELRERVDGRAGEPLKADEPDDER. Positions 82–101 are enriched in basic and acidic residues; that stretch reads PGKELRERVDGRAGEPLKAD.

The protein belongs to the bacterial histone-like protein family. In terms of assembly, heterodimer of an alpha and a beta chain.

Its function is as follows. This protein is one of the two subunits of integration host factor, a specific DNA-binding protein that functions in genetic recombination as well as in transcriptional and translational control. This chain is Integration host factor subunit beta, found in Burkholderia multivorans (strain ATCC 17616 / 249).